Here is a 37-residue protein sequence, read N- to C-terminus: Large ribosomal subunit protein bL36 (37 aa).

Belongs to the bacterial ribosomal protein bL36 family.

This Polaromonas naphthalenivorans (strain CJ2) protein is Large ribosomal subunit protein bL36.